Reading from the N-terminus, the 89-residue chain is Small ribosomal subunit protein bS16 (89 aa).

The protein belongs to the bacterial ribosomal protein bS16 family.

This is Small ribosomal subunit protein bS16 from Geobacillus stearothermophilus (Bacillus stearothermophilus).